Here is a 404-residue protein sequence, read N- to C-terminus: Tryptophan synthase beta chain (404 aa).

N6-(pyridoxal phosphate)lysine is present on Lys-90.

It belongs to the TrpB family. As to quaternary structure, tetramer of two alpha and two beta chains. Pyridoxal 5'-phosphate serves as cofactor.

It catalyses the reaction (1S,2R)-1-C-(indol-3-yl)glycerol 3-phosphate + L-serine = D-glyceraldehyde 3-phosphate + L-tryptophan + H2O. It participates in amino-acid biosynthesis; L-tryptophan biosynthesis; L-tryptophan from chorismate: step 5/5. Functionally, the beta subunit is responsible for the synthesis of L-tryptophan from indole and L-serine. This chain is Tryptophan synthase beta chain (trpB), found in Geobacillus stearothermophilus (Bacillus stearothermophilus).